The primary structure comprises 291 residues: Venom metalloproteinase inhibitor DM43 (291 aa).

2 Ig-like V-type domains span residues 22–79 (TNVT…ILTS) and 114–171 (GLET…PASA). Asparagine 23 is a glycosylation site (N-linked (GlcNAc...) asparagine). Intrachain disulfides connect cysteine 28–cysteine 74 and cysteine 121–cysteine 163. N-linked (GlcNAc...) asparagine glycans are attached at residues asparagine 156, asparagine 160, and asparagine 175. The region spanning 191–288 (PKANFYILND…DSNVLELDLS (98 aa)) is the Ig-like V-type 3 domain. Cysteine 213 and cysteine 265 form a disulfide bridge.

As to quaternary structure, homodimer. In terms of processing, N-glycosylated. In terms of tissue distribution, blood and milk.

Its function is as follows. Metalloproteinase inhibitor. The protein is Venom metalloproteinase inhibitor DM43 of Didelphis marsupialis (Southern opossum).